The following is a 539-amino-acid chain: Lipid scramblase CLPTM1L (539 aa).

Over 1-10 (MWSGRSSFTS) the chain is Cytoplasmic. The chain crosses the membrane as a helical span at residues 11-31 (LVVGVFLVYVVHTCWVMYGIV). Over 32 to 285 (YTRPCSGDSN…LKGIFVDTNL (254 aa)) the chain is Extracellular. N-linked (GlcNAc...) asparagine glycans are attached at residues N91 and N101. The chain crosses the membrane as a helical span at residues 286-306 (YLLALTFFVAAFHLLFDFLAF). Over 307–325 (KSDISFWKKKKSMIGMSTK) the chain is Cytoplasmic. Residues 326–342 (AVLWRCFSTVVIFLFLL) form a helical membrane-spanning segment. Over 343 to 403 (DEQTSLLVLI…TEKYDAQAMK (61 aa)) the chain is Extracellular. Residues 404-424 (YLSYLLYPLCVGGAVYSLLNI) traverse the membrane as a helical segment. The Cytoplasmic segment spans residues 425 to 429 (KYKSW). A helical transmembrane segment spans residues 430–450 (YSWLINSFVNGVYAFGFLFML). At 451–539 (PQLFVNYKMK…EQPKRKPHPD (89 aa)) the chain is on the extracellular side.

The protein belongs to the CLPTM1 family.

Its subcellular location is the endoplasmic reticulum membrane. It carries out the reaction a 6-(alpha-D-glucosaminyl)-1-(1,2-diacyl-sn-glycero-3-phospho)-1D-myo-inositol(in) = a 6-(alpha-D-glucosaminyl)-1-(1,2-diacyl-sn-glycero-3-phospho)-1D-myo-inositol(out). The enzyme catalyses 6-(alpha-D-glucosaminyl)-(1-octadecanoyl,2-(9Z)-octadecenoyl-sn-glycero-3-phospho)-1D-myo-inositol(in) = 6-(alpha-D-glucosaminyl)-(1-octadecanoyl,2-(9Z)-octadecenoyl-sn-glycero-3-phospho)-1D-myo-inositol(out). It catalyses the reaction a 1,2-diacyl-sn-glycero-3-phospho-(1D-myo-inositol)(in) = a 1,2-diacyl-sn-glycero-3-phospho-(1D-myo-inositol)(out). The catalysed reaction is a 1,2-diacyl-sn-glycero-3-phosphocholine(in) = a 1,2-diacyl-sn-glycero-3-phosphocholine(out). It carries out the reaction a 1,2-diacyl-sn-glycero-3-phosphoethanolamine(in) = a 1,2-diacyl-sn-glycero-3-phosphoethanolamine(out). Its function is as follows. Scramblase that mediates the translocation of glucosaminylphosphatidylinositol (alpha-D-GlcN-(1-6)-(1,2-diacyl-sn-glycero-3-phospho)-1D-myo-inositol, GlcN-PI) across the endoplasmic reticulum (ER) membrane, from the cytosolic leaflet to the luminal leaflet of the ER membrane, where it participates in the biosynthesis of glycosylphosphatidylinositol (GPI). GPI is a lipid glycoconjugate involved in post-translational modification of proteins. Can also translocate 1,2-diacyl-sn-glycero-3-phospho-(1D-myo-inositol) (phosphatidylinositol or PI), as well as several other phospholipids (1,2-diacyl-sn-glycero-3-phosphocholine, 1,2-diacyl-sn-glycero-3-phosphoethanolamine), and N-acetylglucosaminylphosphatidylinositol (GlcNAc-PI) in vitro. This is Lipid scramblase CLPTM1L (Clptm1l) from Mus musculus (Mouse).